Reading from the N-terminus, the 1129-residue chain is SMC5-SMC6 complex localization factor protein 2 (1129 aa).

Disordered regions lie at residues 71–178, 312–343, and 955–1057; these read VKAR…SILN, NTSS…TEQA, and MLYD…QLEG. The segment covering 72 to 87 has biased composition (basic residues); sequence KARRHTLPHSSHRRSP. Residues 93–110 show a composition bias toward polar residues; it reads LLFQQRPRNSSGQFTHNP. Composition is skewed to basic and acidic residues over residues 112–130 and 149–166; these read QKKD…KKEL and RKSE…RPRV. Composition is skewed to polar residues over residues 169–178 and 324–343; these read QATSSSSILN and TGRS…TEQA. Acidic residues-rich tracts occupy residues 999–1014 and 1033–1048; these read ESEE…EEDW and SAED…EEES.

The protein belongs to the FAM178 family.

It is found in the nucleus. In terms of biological role, plays a role in the DNA damage response (DDR) pathway by regulating postreplication repair of UV-damaged DNA and genomic stability maintenance. Promotes the recruitment of the SMC5-SMC6 complex to DNA lesions. In Danio rerio (Zebrafish), this protein is SMC5-SMC6 complex localization factor protein 2 (slf2).